Consider the following 1341-residue polypeptide: WASH complex subunit 2A (1341 aa).

Residues 1-220 are sufficient for interaction with WASHC3, WASHC4 and WASHC5; required for interaction with WASHC1; sequence MMNRTTPDQE…VGSDRGSIVD (220 aa). Low complexity predominate over residues 202 to 214; sequence GELSSEEGSVGSD. The tract at residues 202–405 is disordered; it reads GELSSEEGSV…SSSKPGKKIP (204 aa). Acidic residues predominate over residues 220-232; sequence DTEEEKEEEESDE. Residues 233-244 show a composition bias toward basic and acidic residues; that stretch reads DFAHHSDNEQNR. Acidic residues-rich tracts occupy residues 250-259 and 266-276; these read SDEEEDDDGC and EKEEEDIEDIE. Positions 293–307 are enriched in basic and acidic residues; it reads LAARIKGDAVGRVDE. Positions 355–366 are enriched in gly residues; it reads GSGGGLFSGGKG. Residues 356–600 form a sufficient for interaction with CCDC93 region; sequence SGGGLFSGGK…QTLCLQAQRE (245 aa). The required for interaction with CCDC22 and VPS35L stretch occupies residues 356–742; it reads SGGGLFSGGK…KEAQLGVKSV (387 aa). The segment at 357 to 1341 is interaction with VPS35; sequence GGGLFSGGKG…DDPLNAFGGQ (985 aa). Short sequence motifs (LFa) lie at residues 367-378, 411-419, 450-463, and 482-491; these read LFDDEDEESDLF, VFLGDTDVF, LFDDDDGDDDDDFF, and IFGDEEGDLF. The disordered stretch occupies residues 422–554; the sequence is ASVPSMKEPQ…EDLFSSQSAS (133 aa). Positions 451–462 are enriched in acidic residues; the sequence is FDDDDGDDDDDF. Residues 507 to 517 are compositionally biased toward basic and acidic residues; sequence DENKARAEKKV. A compositionally biased stretch (polar residues) spans 518-536; the sequence is TLSSSKNLKPSSETKTQKG. 3 consecutive short sequence motifs (LFa) follow at residues 537 to 548, 572 to 583, and 617 to 629; these read LFSDEEDSEDLF, LFDDEDEEDNLF, and LFSSDEEDQWNIP. Position 539 is a phosphoserine (serine 539). Disordered regions lie at residues 621–664, 696–739, and 751–838; these read DEED…KTSL, DSGG…QLGV, and ESLK…KSTG. Basic and acidic residues predominate over residues 637 to 647; sequence SDSRSKGEPRD. 3 short sequence motifs (LFa) span residues 664 to 674, 690 to 702, and 726 to 738; these read LFEEDEEDDLF, LFEDDVDSGGSLF, and LFSDEEEKEAQLG. A compositionally biased stretch (basic and acidic residues) spans 751–768; that stretch reads ESLKFGRTDVAESEKEGL. Residues 803–817 carry the LFa 11 motif; sequence LFDEEEDKMEDQNII. Over residues 823 to 834 the composition is skewed to basic and acidic residues; sequence EVGKGRDPDAHP. 3 consecutive short sequence motifs (LFa) follow at residues 839-847, 856-862, and 878-888; these read VFQDEELLF, DPDVDLF, and LFGDDEDDDLF. Disordered regions lie at residues 881–951 and 988–1205; these read DDED…KEPS and FPSS…LEDE. Composition is skewed to basic and acidic residues over residues 898–911 and 917–931; these read QEKKRVVKKDHSVD and KHPESIQGSKEKGIW. The segment at 937-1341 is interaction with phospholipids; sequence QDSSGLAPFK…DDPLNAFGGQ (405 aa). The segment covering 1028-1046 has biased composition (basic residues); the sequence is NKSRVKMRGKRRPQTRAAR. Residues 1029–1047 form a required for interaction with F-actin-capping protein subunit alpha (CAPZA1 or CAPZA2 or CAPZA3) region; that stretch reads KSRVKMRGKRRPQTRAARR. Serine 1054 and serine 1087 each carry phosphoserine. Over residues 1094 to 1110 the composition is skewed to low complexity; the sequence is EALAAAAAPWEGGPVPG. Phosphoserine is present on serine 1114. Short sequence motifs (LFa) lie at residues 1129 to 1136, 1171 to 1185, 1201 to 1209, 1234 to 1240, 1262 to 1270, and 1290 to 1299; these read LFDSGDIF, MFPALGEASSDDDLF, LLEDEDDLF, IFEDDIF, LFDDNIDIF, and IFDDDMDDIF. Positions 1135-1145 are enriched in polar residues; sequence IFSTGTGSQSV. The disordered stretch occupies residues 1302 to 1326; sequence GIQAKTTKPKSRSAQAAPEPRFEHK. The short motif at 1330-1338 is the LFa 21 element; that stretch reads IFDDPLNAF.

The protein belongs to the FAM21 family. Component of the WASH core complex also described as WASH regulatory complex (SHRC) composed of WASH (WASHC1, WASH2P or WASH3P), WASHC2 (WASHC2A or WASHC2C), WASHC3, WASHC4 and WASHC5; in the complex interacts (via N-terminus) directly with WASHC1. The WASH core complex associates with the F-actin-capping protein dimer (formed by CAPZA1, CAPZA2 or CAPZA3 and CAPZB) in a transient or substoichiometric manner which was initially described as WASH complex. Interacts with VPS35; mediates the association with the retromer CSC complex. Interacts with FKBP15. Interacts with CCDC93, CCDC22, VPS35L; indicative for an association of the WASH core complex with the CCC and retriever complexes. Directly interacts with TBC1D23.

It is found in the early endosome membrane. It localises to the cell membrane. Its function is as follows. Acts at least in part as component of the WASH core complex whose assembly at the surface of endosomes inhibits WASH nucleation-promoting factor (NPF) activity in recruiting and activating the Arp2/3 complex to induce actin polymerization and is involved in the fission of tubules that serve as transport intermediates during endosome sorting. Mediates the recruitment of the WASH core complex to endosome membranes via binding to phospholipids and VPS35 of the retromer CSC. Mediates the recruitment of the F-actin-capping protein dimer to the WASH core complex probably promoting localized F-actin polymerization needed for vesicle scission. Via its C-terminus binds various phospholipids, most strongly phosphatidylinositol 4-phosphate (PtdIns-(4)P), phosphatidylinositol 5-phosphate (PtdIns-(5)P) and phosphatidylinositol 3,5-bisphosphate (PtdIns-(3,5)P2). Involved in the endosome-to-plasma membrane trafficking and recycling of SNX27-retromer-dependent cargo proteins, such as GLUT1. Required for the association of DNAJC13, ENTR1, ANKRD50 with retromer CSC subunit VPS35. Required for the endosomal recruitment of CCC complex subunits COMMD1 and CCDC93 as well as the retriever complex subunit VPS35L. The chain is WASH complex subunit 2A from Homo sapiens (Human).